The following is an 85-amino-acid chain: Insect toxin 2-53 (85 aa).

Positions 1-21 (MKLLLLLIVSASMLIESLVNA) are cleaved as a signal peptide. One can recognise an LCN-type CS-alpha/beta domain in the interval 22–82 (DGYIKRRDGC…TWKSETNTCG (61 aa)). 4 disulfide bridges follow: C31–C81, C35–C56, C42–C63, and C46–C65. G82 bears the Glycine amide mark.

This sequence belongs to the long (4 C-C) scorpion toxin superfamily. Sodium channel inhibitor family. Beta subfamily. As to expression, expressed by the venom gland.

The protein localises to the secreted. In terms of biological role, depressant insect toxins cause a transient contraction paralysis followed by a slow flaccid paralysis. They bind voltage-independently to sodium channels (Nav) and block action potentials, primarily by depolarizing the axonal membrane and suppressing the sodium current. In Leiurus hebraeus (Hebrew deathstalker scorpion), this protein is Insect toxin 2-53.